A 255-amino-acid polypeptide reads, in one-letter code: Large ribosomal subunit protein uL4 (255 aa).

Belongs to the universal ribosomal protein uL4 family. As to quaternary structure, part of the 50S ribosomal subunit.

Its function is as follows. One of the primary rRNA binding proteins, this protein initially binds near the 5'-end of the 23S rRNA. It is important during the early stages of 50S assembly. It makes multiple contacts with different domains of the 23S rRNA in the assembled 50S subunit and ribosome. Forms part of the polypeptide exit tunnel. This Thermococcus kodakarensis (strain ATCC BAA-918 / JCM 12380 / KOD1) (Pyrococcus kodakaraensis (strain KOD1)) protein is Large ribosomal subunit protein uL4.